The sequence spans 275 residues: Ribosomal RNA small subunit methyltransferase A (275 aa).

The S-adenosyl-L-methionine site is built by asparagine 28, leucine 30, glycine 55, glutamate 77, aspartate 103, and asparagine 123.

Belongs to the class I-like SAM-binding methyltransferase superfamily. rRNA adenine N(6)-methyltransferase family. RsmA subfamily.

The protein localises to the cytoplasm. The enzyme catalyses adenosine(1518)/adenosine(1519) in 16S rRNA + 4 S-adenosyl-L-methionine = N(6)-dimethyladenosine(1518)/N(6)-dimethyladenosine(1519) in 16S rRNA + 4 S-adenosyl-L-homocysteine + 4 H(+). In terms of biological role, specifically dimethylates two adjacent adenosines (A1518 and A1519) in the loop of a conserved hairpin near the 3'-end of 16S rRNA in the 30S particle. May play a critical role in biogenesis of 30S subunits. In Rhizobium etli (strain CIAT 652), this protein is Ribosomal RNA small subunit methyltransferase A.